Reading from the N-terminus, the 512-residue chain is Protein arginine N-methyltransferase 2 (512 aa).

Residues threonine 67 to aspartate 103 form a disordered region. Positions threonine 88–glutamine 99 are enriched in low complexity. The region spanning aspartate 120–glutamine 508 is the SAM-dependent MTase PRMT-type domain. The S-adenosyl-L-methionine site is built by histidine 133, arginine 142, glycine 166, and glutamate 217. Residues glutamate 231 and glutamate 240 contribute to the active site. Residues aspartate 375–lysine 395 form a disordered region.

It belongs to the class I-like SAM-binding methyltransferase superfamily. Protein arginine N-methyltransferase family.

It localises to the cytoplasm. Its subcellular location is the nucleus. The catalysed reaction is L-arginyl-[protein] + 2 S-adenosyl-L-methionine = N(omega),N(omega)-dimethyl-L-arginyl-[protein] + 2 S-adenosyl-L-homocysteine + 2 H(+). Arginine methyltransferase that methylates the guanidino nitrogens of arginyl residues in some proteins such as histones. This chain is Protein arginine N-methyltransferase 2 (prmt2), found in Dictyostelium discoideum (Social amoeba).